The primary structure comprises 62 residues: Photosystem II reaction center protein Z (62 aa).

2 consecutive transmembrane segments (helical) span residues A8–A28 and F41–I61.

It belongs to the PsbZ family. As to quaternary structure, PSII is composed of 1 copy each of membrane proteins PsbA, PsbB, PsbC, PsbD, PsbE, PsbF, PsbH, PsbI, PsbJ, PsbK, PsbL, PsbM, PsbT, PsbY, PsbZ, Psb30/Ycf12, at least 3 peripheral proteins of the oxygen-evolving complex and a large number of cofactors. It forms dimeric complexes.

The protein resides in the plastid. It is found in the chloroplast thylakoid membrane. Its function is as follows. May control the interaction of photosystem II (PSII) cores with the light-harvesting antenna, regulates electron flow through the 2 photosystem reaction centers. PSII is a light-driven water plastoquinone oxidoreductase, using light energy to abstract electrons from H(2)O, generating a proton gradient subsequently used for ATP formation. The protein is Photosystem II reaction center protein Z of Pinus thunbergii (Japanese black pine).